A 422-amino-acid chain; its full sequence is ATP phosphoribosyltransferase regulatory subunit (422 aa).

The protein belongs to the class-II aminoacyl-tRNA synthetase family. HisZ subfamily. Heteromultimer composed of HisG and HisZ subunits.

It localises to the cytoplasm. The protein operates within amino-acid biosynthesis; L-histidine biosynthesis; L-histidine from 5-phospho-alpha-D-ribose 1-diphosphate: step 1/9. In terms of biological role, required for the first step of histidine biosynthesis. May allow the feedback regulation of ATP phosphoribosyltransferase activity by histidine. This chain is ATP phosphoribosyltransferase regulatory subunit, found in Clostridium botulinum (strain 657 / Type Ba4).